The sequence spans 436 residues: 3-ketoacyl-CoA thiolase (436 aa).

Catalysis depends on Cys-99, which acts as the Acyl-thioester intermediate. Active-site proton acceptor residues include His-392 and Cys-422.

Belongs to the thiolase-like superfamily. Thiolase family. In terms of assembly, heterotetramer of two alpha chains (FadJ) and two beta chains (FadI).

It is found in the cytoplasm. The catalysed reaction is an acyl-CoA + acetyl-CoA = a 3-oxoacyl-CoA + CoA. Its pathway is lipid metabolism; fatty acid beta-oxidation. Catalyzes the final step of fatty acid oxidation in which acetyl-CoA is released and the CoA ester of a fatty acid two carbons shorter is formed. This Photobacterium profundum (strain SS9) protein is 3-ketoacyl-CoA thiolase.